The following is a 200-amino-acid chain: TATA-box-binding protein (200 aa).

Tandem repeats lie at residues 25–101 (LQNI…ARII) and 115–192 (IQNI…YPVL).

The protein belongs to the TBP family. In terms of assembly, belongs to the TFIID complex together with the TBP-associated factors (TAFs). Binds DNA as monomer.

It localises to the nucleus. In terms of biological role, general transcription factor that functions at the core of the DNA-binding multiprotein factor TFIID. Binding of TFIID to the TATA box is the initial transcriptional step of the pre-initiation complex (PIC), playing a role in the activation of eukaryotic genes transcribed by RNA polymerase II. This is TATA-box-binding protein from Mesembryanthemum crystallinum (Common ice plant).